The following is a 187-amino-acid chain: ATP synthase subunit b 2 (187 aa).

The chain crosses the membrane as a helical span at residues 39-61; it reads SQLVWLVLSFAALYLLMSRVALP.

This sequence belongs to the ATPase B chain family. In terms of assembly, F-type ATPases have 2 components, F(1) - the catalytic core - and F(0) - the membrane proton channel. F(1) has five subunits: alpha(3), beta(3), gamma(1), delta(1), epsilon(1). F(0) has three main subunits: a(1), b(2) and c(10-14). The alpha and beta chains form an alternating ring which encloses part of the gamma chain. F(1) is attached to F(0) by a central stalk formed by the gamma and epsilon chains, while a peripheral stalk is formed by the delta and b chains.

The protein resides in the cell inner membrane. Functionally, f(1)F(0) ATP synthase produces ATP from ADP in the presence of a proton or sodium gradient. F-type ATPases consist of two structural domains, F(1) containing the extramembraneous catalytic core and F(0) containing the membrane proton channel, linked together by a central stalk and a peripheral stalk. During catalysis, ATP synthesis in the catalytic domain of F(1) is coupled via a rotary mechanism of the central stalk subunits to proton translocation. In terms of biological role, component of the F(0) channel, it forms part of the peripheral stalk, linking F(1) to F(0). This chain is ATP synthase subunit b 2, found in Parvibaculum lavamentivorans (strain DS-1 / DSM 13023 / NCIMB 13966).